We begin with the raw amino-acid sequence, 373 residues long: MTEVLWPAAPNGTDAAFLASPGFHWGNSTATSTAAAAAPFRCALTKTGFQFYYLPAVYIVVFIIGFLGNSIAIWMFVFHMKPWSGISVYMFNLALADFLYVLTLPALIFYYFNKTNWIFGDAMCKLQRFIFHVNLYGSILFLTCISAHRYSGVVYPLKSLGRLKKKNAVYISVLVWLIVVVAISPILFYSGTGIRKNKTITCYDTTSDEYLRSYFIYSMCTTVAMFCVPLVLILGCYGLIVRALIYKDLDNSPLRRKSIYLVIIVLTVFAVSYIPFHVMKTMNLRARLDFQTPEMCTFNDRVYATYQVTRGLASLNSCVDPILYFLAGDTFRRRLSRATRKASRRSEANLQSKSEDMTLNILSEFKQNGDTSL.

Topologically, residues 1–51 (MTEVLWPAAPNGTDAAFLASPGFHWGNSTATSTAAAAAPFRCALTKTGFQF) are extracellular. Residues Asn11 and Asn27 are each glycosylated (N-linked (GlcNAc...) asparagine). Cystine bridges form between Cys42-Cys296 and Cys124-Cys202. Lys46 serves as a coordination point for ADP. A helical membrane pass occupies residues 52–74 (YYLPAVYIVVFIIGFLGNSIAIW). Residues 75–87 (MFVFHMKPWSGIS) are Cytoplasmic-facing. Residues 88–109 (VYMFNLALADFLYVLTLPALIF) form a helical membrane-spanning segment. Residues 110–125 (YYFNKTNWIFGDAMCK) lie on the Extracellular side of the membrane. The N-linked (GlcNAc...) asparagine glycan is linked to Asn113. The chain crosses the membrane as a helical span at residues 126-147 (LQRFIFHVNLYGSILFLTCISA). Residues 148-166 (HRYSGVVYPLKSLGRLKKK) are Cytoplasmic-facing. Residues 167–188 (NAVYISVLVWLIVVVAISPILF) traverse the membrane as a helical segment. Residues 189–214 (YSGTGIRKNKTITCYDTTSDEYLRSY) lie on the Extracellular side of the membrane. Asn197 is a glycosylation site (N-linked (GlcNAc...) asparagine). 203-205 (YDT) contacts ADP. Residues 215–237 (FIYSMCTTVAMFCVPLVLILGCY) traverse the membrane as a helical segment. At 238–260 (GLIVRALIYKDLDNSPLRRKSIY) the chain is on the cytoplasmic side. The chain crosses the membrane as a helical span at residues 261 to 284 (LVIIVLTVFAVSYIPFHVMKTMNL). ADP-binding positions include 283 to 287 (NLRAR), 303 to 306 (YATY), and Arg310. The Extracellular segment spans residues 285 to 303 (RARLDFQTPEMCTFNDRVY). A helical transmembrane segment spans residues 304–325 (ATYQVTRGLASLNSCVDPILYF). Residues 326-373 (LAGDTFRRRLSRATRKASRRSEANLQSKSEDMTLNILSEFKQNGDTSL) lie on the Cytoplasmic side of the membrane.

Belongs to the G-protein coupled receptor 1 family.

The protein resides in the cell membrane. Functionally, receptor for extracellular adenine nucleotides such as ADP. In platelets, binding to ADP leads to mobilization of intracellular calcium ions via activation of phospholipase C, a change in platelet shape, and ultimately platelet aggregation. This chain is P2Y purinoceptor 1 (P2RY1), found in Cavia porcellus (Guinea pig).